Consider the following 627-residue polypeptide: 1-deoxy-D-xylulose-5-phosphate synthase (627 aa).

Residues histidine 80 and 121 to 123 (GHS) each bind thiamine diphosphate. Aspartate 152 serves as a coordination point for Mg(2+). Residues 153–154 (GA), asparagine 181, tyrosine 288, and glutamate 370 contribute to the thiamine diphosphate site. A Mg(2+)-binding site is contributed by asparagine 181.

The protein belongs to the transketolase family. DXPS subfamily. As to quaternary structure, homodimer. Mg(2+) is required as a cofactor. Requires thiamine diphosphate as cofactor.

It catalyses the reaction D-glyceraldehyde 3-phosphate + pyruvate + H(+) = 1-deoxy-D-xylulose 5-phosphate + CO2. The protein operates within metabolic intermediate biosynthesis; 1-deoxy-D-xylulose 5-phosphate biosynthesis; 1-deoxy-D-xylulose 5-phosphate from D-glyceraldehyde 3-phosphate and pyruvate: step 1/1. Functionally, catalyzes the acyloin condensation reaction between C atoms 2 and 3 of pyruvate and glyceraldehyde 3-phosphate to yield 1-deoxy-D-xylulose-5-phosphate (DXP). The protein is 1-deoxy-D-xylulose-5-phosphate synthase of Aliivibrio fischeri (strain MJ11) (Vibrio fischeri).